We begin with the raw amino-acid sequence, 507 residues long: MPPDLRMQPLPFPMMTLTSETKLDLEKAGVLVLGVEPSADSGESSDGKTTANCIAVSSLPESLAATVKNACSSGEVTGKPGELTSFATGNAQTPWIVLAGLGASDKRTRGSAIELGAAVVRSLASKPRQQITFALGDGVATENHDAVVAGAVSGCEGQHLYQREPSISVPEAIAFVGYSAESVSRGEKLGQSINHTRRLVNEPPSIMNPTGFAQYAEKIASDCGLTCEVWDEKKLEAENCRAILAVGRASTSPPRLVMLRHDGGGDEAPLVVVGKGVTFDSGGLSLKPSDGMVDMKCDMAGAATVVGVMNALAKLKVPRNVIGLCGLAENMVSGDSYKLGDVIETRSGKTIEILNTDAEGRVVLADTLDVAVQQKPQAIVDLATLTGACMVALGIDVAGLMTNNQALCDAVQSAAESECEPVWQLPMFSLYDDKVKSKVADIKNVGEGRWGGAITAAKFLENFVADVPWVHIDIAGPAFVDSPKPHRDAGATGVMVRSLVRWIENAS.

Mn(2+)-binding residues include Lys-275 and Asp-280. Residue Lys-287 is part of the active site. 3 residues coordinate Mn(2+): Asp-298, Asp-357, and Glu-359. Arg-361 is a catalytic residue.

It belongs to the peptidase M17 family. It depends on Mn(2+) as a cofactor.

The protein localises to the cytoplasm. It carries out the reaction Release of an N-terminal amino acid, Xaa-|-Yaa-, in which Xaa is preferably Leu, but may be other amino acids including Pro although not Arg or Lys, and Yaa may be Pro. Amino acid amides and methyl esters are also readily hydrolyzed, but rates on arylamides are exceedingly low.. It catalyses the reaction Release of an N-terminal amino acid, preferentially leucine, but not glutamic or aspartic acids.. Its function is as follows. Presumably involved in the processing and regular turnover of intracellular proteins. Catalyzes the removal of unsubstituted N-terminal amino acids from various peptides. This is Probable cytosol aminopeptidase from Rhodopirellula baltica (strain DSM 10527 / NCIMB 13988 / SH1).